A 74-amino-acid polypeptide reads, in one-letter code: Peptide Im-4 (74 aa).

An N-terminal signal peptide occupies residues 1-22 (MKFQYLLAIFMIVLVVTDHCQA). At Lys39 the chain carries Lysine amide; partial. The propeptide occupies 40–74 (GRRRRQLEARYEPQQRNFRKREIDFEKLFANMPDY).

Belongs to the non-disulfide-bridged peptide (NDBP) superfamily. Short antimicrobial peptide (group 4) family. As to expression, expressed by the venom gland.

The protein localises to the secreted. It is found in the target cell membrane. Antimicrobial peptide that probably forms pores in target membranes. Has antibacterial activity against Gram-positive bacteria S.aureus NBRC 13276 (MIC=5-10 uM) and B.subtilis NBRC 3009 (MIC=2.5-5 uM) but not against Gram-negative bacterium E.coli NBRC 3972. The protein is Peptide Im-4 of Isometrus maculatus (Lesser brown scorpion).